A 383-amino-acid chain; its full sequence is Histidine decarboxylase (383 aa).

Histidine 120 provides a ligand contact to substrate. Lysine 233 is subject to N6-(pyridoxal phosphate)lysine.

It belongs to the group II decarboxylase family. Homotetramer. The cofactor is pyridoxal 5'-phosphate.

It catalyses the reaction L-histidine + H(+) = histamine + CO2. This is Histidine decarboxylase from Acinetobacter baumannii (strain ATCC 17978 / DSM 105126 / CIP 53.77 / LMG 1025 / NCDC KC755 / 5377).